A 163-amino-acid chain; its full sequence is MTIDEIYQMYMNDVYRFLLSMTKDKHLAEDLLQETFMRAYIHIHSYDHSKVKPWLFQVARNAFIDYVRKHKKEVTISDDLIGSLFQNAVQSPAHQVEIKEVLTGYMSELPDNYREALTLYYLKELNYKEASHIMNISEANFKSVLFRARQRLKALYNRGVNDE.

The Polymerase core binding signature appears at aspartate 30–isoleucine 43. The segment at residues tyrosine 127–phenylalanine 146 is a DNA-binding region (H-T-H motif).

This sequence belongs to the sigma-70 factor family. ECF subfamily. As to quaternary structure, interacts with the N-terminus of YhdL, which is probably its anti-sigma factor. Interacts transiently with the RNAP core.

In terms of biological role, sigma factors are initiation factors that promote the attachment of RNA polymerase (RNAP) to specific initiation sites and are then released. Extracytoplasmic function (ECF) sigma factors are held in an inactive form by a cognate anti-sigma factor (YhdL) until released. This sigma factor is involved in the maintenance of membrane and cell wall integrity in response to environmental stresses including salt, acid, ethanol and antibiotics stress. Partially regulates transcription from a number of genes including disA. Associates with RNAP core under all growth phases. The sequence is that of ECF RNA polymerase sigma factor SigM (sigM) from Bacillus subtilis (strain 168).